The primary structure comprises 231 residues: 5'-methylthioadenosine/S-adenosylhomocysteine nucleosidase (231 aa).

The Proton acceptor role is filled by Glu12. Substrate-binding positions include Gly78, Val153, and 174–175 (ME). Asp198 (proton donor) is an active-site residue.

It belongs to the PNP/UDP phosphorylase family. MtnN subfamily.

The enzyme catalyses S-adenosyl-L-homocysteine + H2O = S-(5-deoxy-D-ribos-5-yl)-L-homocysteine + adenine. It catalyses the reaction S-methyl-5'-thioadenosine + H2O = 5-(methylsulfanyl)-D-ribose + adenine. It carries out the reaction 5'-deoxyadenosine + H2O = 5-deoxy-D-ribose + adenine. It functions in the pathway amino-acid biosynthesis; L-methionine biosynthesis via salvage pathway; S-methyl-5-thio-alpha-D-ribose 1-phosphate from S-methyl-5'-thioadenosine (hydrolase route): step 1/2. Functionally, catalyzes the irreversible cleavage of the glycosidic bond in both 5'-methylthioadenosine (MTA) and S-adenosylhomocysteine (SAH/AdoHcy) to adenine and the corresponding thioribose, 5'-methylthioribose and S-ribosylhomocysteine, respectively. Also cleaves 5'-deoxyadenosine, a toxic by-product of radical S-adenosylmethionine (SAM) enzymes, into 5-deoxyribose and adenine. The chain is 5'-methylthioadenosine/S-adenosylhomocysteine nucleosidase from Vibrio parahaemolyticus serotype O3:K6 (strain RIMD 2210633).